The primary structure comprises 160 residues: Putative pre-16S rRNA nuclease (160 aa).

It belongs to the YqgF nuclease family.

It localises to the cytoplasm. Functionally, could be a nuclease involved in processing of the 5'-end of pre-16S rRNA. The chain is Putative pre-16S rRNA nuclease from Jannaschia sp. (strain CCS1).